Consider the following 413-residue polypeptide: NPL4-like protein 1 (413 aa).

Position 104 is a phosphoserine (S104). Residues 131–272 (SVSFDRDCAN…ADVHFEPFQM (142 aa)) enclose the MPN domain.

It belongs to the NPL4 family.

It functions in the pathway protein degradation; proteasomal ubiquitin-dependent pathway. Functionally, may be part of a complex that binds ubiquitinated proteins and that is necessary for the export of misfolded proteins from the ER to the cytoplasm, where they are degraded by the proteasome. This Arabidopsis thaliana (Mouse-ear cress) protein is NPL4-like protein 1.